Consider the following 323-residue polypeptide: tRNA dimethylallyltransferase (323 aa).

Residue 12–19 (GPTAAGKT) coordinates ATP. Residue 14–19 (TAAGKT) coordinates substrate. Interaction with substrate tRNA stretches follow at residues 37–40 (DSAL) and 161–165 (QRLIR).

The protein belongs to the IPP transferase family. In terms of assembly, monomer. Requires Mg(2+) as cofactor.

The enzyme catalyses adenosine(37) in tRNA + dimethylallyl diphosphate = N(6)-dimethylallyladenosine(37) in tRNA + diphosphate. Functionally, catalyzes the transfer of a dimethylallyl group onto the adenine at position 37 in tRNAs that read codons beginning with uridine, leading to the formation of N6-(dimethylallyl)adenosine (i(6)A). The sequence is that of tRNA dimethylallyltransferase from Pseudomonas syringae pv. tomato (strain ATCC BAA-871 / DC3000).